The primary structure comprises 215 residues: Cytochrome b6 (215 aa).

Residues 32 to 52 traverse the membrane as a helical segment; the sequence is IFYCLGGITLTCFLVQVATGF. Position 35 (C35) interacts with heme c. The heme b site is built by H86 and H100. 3 helical membrane-spanning segments follow: residues 90–110, 116–136, and 186–206; these read ASMM…TGGF, LTWV…VTGY, and LHTF…FLMI. Heme b-binding residues include H187 and H202.

It belongs to the cytochrome b family. PetB subfamily. The 4 large subunits of the cytochrome b6-f complex are cytochrome b6, subunit IV (17 kDa polypeptide, PetD), cytochrome f and the Rieske protein, while the 4 small subunits are PetG, PetL, PetM and PetN. The complex functions as a dimer. Heme b serves as cofactor. Requires heme c as cofactor.

It localises to the plastid. The protein localises to the chloroplast thylakoid membrane. Component of the cytochrome b6-f complex, which mediates electron transfer between photosystem II (PSII) and photosystem I (PSI), cyclic electron flow around PSI, and state transitions. The sequence is that of Cytochrome b6 from Huperzia lucidula (Shining clubmoss).